We begin with the raw amino-acid sequence, 223 residues long: Small ribosomal subunit protein uS3 (223 aa).

The 70-residue stretch at 39–108 folds into the KH type-2 domain; the sequence is IRNFVKKNSY…NILINIVEVK (70 aa).

This sequence belongs to the universal ribosomal protein uS3 family. Part of the 30S ribosomal subunit. Forms a tight complex with proteins S10 and S14.

Binds the lower part of the 30S subunit head. Binds mRNA in the 70S ribosome, positioning it for translation. The polypeptide is Small ribosomal subunit protein uS3 (Clostridium botulinum (strain Hall / ATCC 3502 / NCTC 13319 / Type A)).